The primary structure comprises 102 residues: Small ribosomal subunit protein uS10 (102 aa).

Belongs to the universal ribosomal protein uS10 family. As to quaternary structure, part of the 30S ribosomal subunit.

Its function is as follows. Involved in the binding of tRNA to the ribosomes. This is Small ribosomal subunit protein uS10 from Finegoldia magna (strain ATCC 29328 / DSM 20472 / WAL 2508) (Peptostreptococcus magnus).